A 115-amino-acid chain; its full sequence is Large ribosomal subunit protein bL19 (115 aa).

It belongs to the bacterial ribosomal protein bL19 family.

Its function is as follows. This protein is located at the 30S-50S ribosomal subunit interface and may play a role in the structure and function of the aminoacyl-tRNA binding site. The polypeptide is Large ribosomal subunit protein bL19 (rplS) (Buchnera aphidicola subsp. Acyrthosiphon pisum (strain APS) (Acyrthosiphon pisum symbiotic bacterium)).